The sequence spans 158 residues: 6,7-dimethyl-8-ribityllumazine synthase (158 aa).

5-amino-6-(D-ribitylamino)uracil-binding positions include F18, 50–52, and 74–76; these read SYD and AVI. 79-80 contacts (2S)-2-hydroxy-3-oxobutyl phosphate; it reads ET. H82 serves as the catalytic Proton donor. L107 is a binding site for 5-amino-6-(D-ribitylamino)uracil. Residue R122 participates in (2S)-2-hydroxy-3-oxobutyl phosphate binding.

Belongs to the DMRL synthase family.

It catalyses the reaction (2S)-2-hydroxy-3-oxobutyl phosphate + 5-amino-6-(D-ribitylamino)uracil = 6,7-dimethyl-8-(1-D-ribityl)lumazine + phosphate + 2 H2O + H(+). The protein operates within cofactor biosynthesis; riboflavin biosynthesis; riboflavin from 2-hydroxy-3-oxobutyl phosphate and 5-amino-6-(D-ribitylamino)uracil: step 1/2. Functionally, catalyzes the formation of 6,7-dimethyl-8-ribityllumazine by condensation of 5-amino-6-(D-ribitylamino)uracil with 3,4-dihydroxy-2-butanone 4-phosphate. This is the penultimate step in the biosynthesis of riboflavin. This is 6,7-dimethyl-8-ribityllumazine synthase from Sulfolobus acidocaldarius (strain ATCC 33909 / DSM 639 / JCM 8929 / NBRC 15157 / NCIMB 11770).